The following is a 324-amino-acid chain: Polycomb complex protein BMI-1-B (324 aa).

The RING-type zinc finger occupies 18 to 57; it reads CVLCGGYFIDATTIVECLHSFCKMCIVRYLETSKYCPICD. Positions 81 to 95 match the Nuclear localization signal motif; the sequence is KLVPGLFKNEMKRRR. The tract at residues 232 to 324 is disordered; that stretch reads IKLSSPRNDM…TSHNGSNSLG (93 aa). Positions 256–279 are enriched in low complexity; the sequence is DKPNSPSIVAAPSTSSSMPSPNTP. Polar residues-rich tracts occupy residues 280-295 and 303-324; these read VQSTHPSFPHISTING and NGQTPFSSKVCKTSHNGSNSLG.

In terms of assembly, component of a PRC1-like complex. Homodimer. Interacts with cbx2.

It is found in the nucleus. In terms of biological role, component of a Polycomb group (PcG) multiprotein PRC1-like complex, a complex class required to maintain the transcriptionally repressive state of many genes, including Hox genes, throughout development. PcG PRC1 complex acts via chromatin remodeling and modification of histones; it mediates monoubiquitination of histone H2A 'Lys-119', rendering chromatin heritably changed in its expressibility. In the PRC1 complex, it is required to stimulate the E3 ubiquitin-protein ligase activity of rnf2. This chain is Polycomb complex protein BMI-1-B (bmi1b), found in Danio rerio (Zebrafish).